We begin with the raw amino-acid sequence, 453 residues long: Bifunctional protein GlmU (453 aa).

Residues 1 to 227 form a pyrophosphorylase region; sequence MAVSVIILAA…SIEVMGVNDR (227 aa). UDP-N-acetyl-alpha-D-glucosamine-binding positions include 8–11, Lys-22, Gln-73, 78–79, 100–102, Gly-137, Glu-152, Asn-167, and Asn-225; these read LAAG, GT, and SGD. Asp-102 provides a ligand contact to Mg(2+). Asn-225 is a binding site for Mg(2+). A linker region spans residues 228–248; the sequence is QQLAYLERFYQKREAARLMGE. Residues 249–453 are N-acetyltransferase; that stretch reads GVSLSDPDRF…WPGWKRPSKK (205 aa). Residues Arg-331 and Lys-349 each coordinate UDP-N-acetyl-alpha-D-glucosamine. His-361 functions as the Proton acceptor in the catalytic mechanism. 2 residues coordinate UDP-N-acetyl-alpha-D-glucosamine: Tyr-364 and Asn-375. Acetyl-CoA-binding positions include Ala-378, 384–385, Ser-403, Ala-421, and Arg-438; that span reads NY. The interval 430 to 453 is disordered; the sequence is PPGELTLSRTPQKSWPGWKRPSKK.

This sequence in the N-terminal section; belongs to the N-acetylglucosamine-1-phosphate uridyltransferase family. It in the C-terminal section; belongs to the transferase hexapeptide repeat family. Homotrimer. Mg(2+) serves as cofactor.

It localises to the cytoplasm. It carries out the reaction alpha-D-glucosamine 1-phosphate + acetyl-CoA = N-acetyl-alpha-D-glucosamine 1-phosphate + CoA + H(+). The enzyme catalyses N-acetyl-alpha-D-glucosamine 1-phosphate + UTP + H(+) = UDP-N-acetyl-alpha-D-glucosamine + diphosphate. It functions in the pathway nucleotide-sugar biosynthesis; UDP-N-acetyl-alpha-D-glucosamine biosynthesis; N-acetyl-alpha-D-glucosamine 1-phosphate from alpha-D-glucosamine 6-phosphate (route II): step 2/2. The protein operates within nucleotide-sugar biosynthesis; UDP-N-acetyl-alpha-D-glucosamine biosynthesis; UDP-N-acetyl-alpha-D-glucosamine from N-acetyl-alpha-D-glucosamine 1-phosphate: step 1/1. It participates in bacterial outer membrane biogenesis; LPS lipid A biosynthesis. Functionally, catalyzes the last two sequential reactions in the de novo biosynthetic pathway for UDP-N-acetylglucosamine (UDP-GlcNAc). The C-terminal domain catalyzes the transfer of acetyl group from acetyl coenzyme A to glucosamine-1-phosphate (GlcN-1-P) to produce N-acetylglucosamine-1-phosphate (GlcNAc-1-P), which is converted into UDP-GlcNAc by the transfer of uridine 5-monophosphate (from uridine 5-triphosphate), a reaction catalyzed by the N-terminal domain. The polypeptide is Bifunctional protein GlmU (Nitrosococcus oceani (strain ATCC 19707 / BCRC 17464 / JCM 30415 / NCIMB 11848 / C-107)).